A 195-amino-acid polypeptide reads, in one-letter code: Glycerol-3-phosphate acyltransferase (195 aa).

Helical transmembrane passes span 7 to 27 (IFIL…SYVI), 52 to 72 (LALL…AIAQ), 80 to 100 (ILFL…YLFF), 113 to 133 (LIFI…ICFL), and 147 to 167 (LIAL…IFTI).

The protein belongs to the PlsY family. In terms of assembly, probably interacts with PlsX.

The protein resides in the cell inner membrane. It catalyses the reaction an acyl phosphate + sn-glycerol 3-phosphate = a 1-acyl-sn-glycero-3-phosphate + phosphate. It functions in the pathway lipid metabolism; phospholipid metabolism. In terms of biological role, catalyzes the transfer of an acyl group from acyl-phosphate (acyl-PO(4)) to glycerol-3-phosphate (G3P) to form lysophosphatidic acid (LPA). This enzyme utilizes acyl-phosphate as fatty acyl donor, but not acyl-CoA or acyl-ACP. The polypeptide is Glycerol-3-phosphate acyltransferase (Ehrlichia ruminantium (strain Welgevonden)).